The chain runs to 216 residues: Pathogenicity-related ORF2 (216 aa).

The next 4 helical transmembrane spans lie at 6-26 (VGSLLLVVVIMLGLLPFAAMV), 55-75 (LNGVALLVSCFVMAPVGMEAF), 157-177 (IGFLLYLVFIVIDLVVANALM), and 193-213 (FKLLLFVAMDGWSMLIHGLVL).

Belongs to the FliP/MopC/SpaP family.

Its subcellular location is the cell membrane. Its function is as follows. Important for pathogenicity. The chain is Pathogenicity-related ORF2 from Xanthomonas campestris pv. glycines.